A 92-amino-acid polypeptide reads, in one-letter code: Cell division protein FtsL (92 aa).

Residues 1–3 (MGR) are Cytoplasmic-facing. Residues 4–21 (ISLIVAALLMLSAISLVT) traverse the membrane as a helical segment. At 22-92 (SRYQSRQLFI…YMNQPAGGAQ (71 aa)) the chain is on the periplasmic side.

This sequence belongs to the FtsL family. As to quaternary structure, part of a complex composed of FtsB, FtsL and FtsQ.

Its subcellular location is the cell inner membrane. Its function is as follows. Essential cell division protein. May link together the upstream cell division proteins, which are predominantly cytoplasmic, with the downstream cell division proteins, which are predominantly periplasmic. This Bordetella pertussis (strain Tohama I / ATCC BAA-589 / NCTC 13251) protein is Cell division protein FtsL.